We begin with the raw amino-acid sequence, 652 residues long: DNA ligase (652 aa).

NAD(+) contacts are provided by residues 29 to 33, 78 to 79, and Glu107; these read DSDYD and SL. Catalysis depends on Lys109, which acts as the N6-AMP-lysine intermediate. The NAD(+) site is built by Arg130, Glu164, Lys278, and Lys302. Cys395, Cys398, Cys413, and Cys418 together coordinate Zn(2+). The BRCT domain maps to 577–652; the sequence is NSDAALFGLT…IEDEDWLRQL (76 aa).

It belongs to the NAD-dependent DNA ligase family. LigA subfamily. Mg(2+) is required as a cofactor. It depends on Mn(2+) as a cofactor.

The enzyme catalyses NAD(+) + (deoxyribonucleotide)n-3'-hydroxyl + 5'-phospho-(deoxyribonucleotide)m = (deoxyribonucleotide)n+m + AMP + beta-nicotinamide D-nucleotide.. In terms of biological role, DNA ligase that catalyzes the formation of phosphodiester linkages between 5'-phosphoryl and 3'-hydroxyl groups in double-stranded DNA using NAD as a coenzyme and as the energy source for the reaction. It is essential for DNA replication and repair of damaged DNA. This Streptococcus pyogenes serotype M4 (strain MGAS10750) protein is DNA ligase.